Reading from the N-terminus, the 171-residue chain is MEIILIKPVRKLGKIGDILKVADGFGRNYLLPQKLAIRATEPNKELIVKQKHEFEAKDKQIREEVEKINALIKDQQLVFIRQTSNDGKLFGSVTNKEIANKLSENISYNISHSNVILDKQIKSTGIYTVEIRLHAELNAIVTVIVARSESEAQDYLREQKTETSEDLAESA.

The protein belongs to the bacterial ribosomal protein bL9 family.

Binds to the 23S rRNA. The sequence is that of Large ribosomal subunit protein bL9 from Rickettsia rickettsii (strain Iowa).